The following is a 416-amino-acid chain: tRNA (guanine-N(7)-)-methyltransferase non-catalytic subunit wuho (416 aa).

The segment at 47-88 (TQSQESCPATATSTTAGKEPGGKEQQLAKQPEEGGTSASGSV) is disordered. The span at 49–62 (SQESCPATATSTTA) shows a compositional bias: polar residues. 4 WD repeats span residues 89–130 (ATST…ARLL), 177–216 (GHLSVVYDILWSEDQQHIITCDRDDKIRVTNYPATFDIHS), 220–258 (GHREFVSGLALLTEQHIASASGDKTLRVWNYIQGKELLQ), and 317–357 (AGSW…PTTN).

It belongs to the WD repeat TRM82 family. As to quaternary structure, forms a heterodimer with the catalytic subunit Mettl1. Interacts with mei-P26 and weakly interacts with bgcn; required for the function or formation of the mei-P26-bgcn-bam-sxl complex. Interacts with nanos; may be involved in mei-P26-dependent derepression of the BMP signaling pathway. Interacts with Myc; the interaction may be mediated by mei-P26 and may be involved in the regulation of ribosome biogenesis. As to expression, in testis, it is present at high level in hub cells, a niche for germline stem cells of testis. Ubiquitously expressed in all testicular cells throughout spermatogenesis. Ubiquitously expressed in all germline and somatic cells of the ovary.

It is found in the nucleus. Its subcellular location is the cytoplasm. It participates in tRNA modification; N(7)-methylguanine-tRNA biosynthesis. In terms of biological role, required for the Mettl1-dependent formation of N(7)-methylguanine at position 46 (m7G46) in tRNA. In the Mettl1-wuho methyltransferase complex, it is required to stabilize and induce conformational changes of the catalytic subunit. Required for binding of nanos mRNA and repression of translation by the mei-P26-bgcn-bam-sxl complex. May cooperate with mei-P26 and nanos to derepress the BMP signaling pathway. May cooperate with mei-P26 to suppress expression of a subset of microRNAs. May cooperate with mei-P26 to regulate bam expression levels in germline cells during gametogenesis. Required to promote mitosis to meiosis transition during gametogenesis. May regulate germline cell division in part by regulating ribosome biogenesis. The chain is tRNA (guanine-N(7)-)-methyltransferase non-catalytic subunit wuho from Drosophila erecta (Fruit fly).